Consider the following 247-residue polypeptide: Lysosomal membrane ascorbate-dependent ferrireductase CYB561A3 (247 aa).

Residues 1–3 are Cytoplasmic-facing; that stretch reads MRG. A helical membrane pass occupies residues 4 to 24; it reads IVGFYITYLLCLILGIACVVL. The region spanning 13–223 is the Cytochrome b561 domain; sequence LCLILGIACV…FGLVVLKILS (211 aa). The Lumenal portion of the chain corresponds to 25-46; that stretch reads VVHWNFMYRDGFAWDGSSKNFN. A helical transmembrane segment spans residues 47–67; that stretch reads WHPVLMVTGMLVLYGNAAVVY. Heme b contacts are provided by His-48 and Arg-68. Over 68–82 the chain is Cytoplasmic; the sequence is RIPLTWGHNKLPWKL. Residues Lys-77 and Lys-81 each contribute to the L-ascorbate site. Residues 83 to 103 traverse the membrane as a helical segment; the sequence is LHAGLLLLSFIFSVIGLCAVF. Heme b is bound by residues His-84, 113-116, and His-118; that span reads NLYS. The Lumenal portion of the chain corresponds to 104 to 120; sequence NFHNVHHTANLYSLHSW. A helical transmembrane segment spans residues 121–141; sequence VGICTAALFTAQWVMGFTSFL. At 142 to 155 the chain is on the cytoplasmic side; the sequence is LPCTPMAVRAFVKP. Arg-150 provides a ligand contact to L-ascorbate. A helical membrane pass occupies residues 156–176; the sequence is THVWMGAMILVLSIVSCISGI. Residues His-157 and Glu-178 each contribute to the heme b site. Topologically, residues 177-201 are lumenal; it reads NEKLFFVLKETTNGTKPYSALPPEA. Asn-189 carries an N-linked (GlcNAc...) asparagine glycan. Residues 202–222 traverse the membrane as a helical segment; it reads VAANSLGVIIVAFGLVVLKIL. The Cytoplasmic segment spans residues 223–247; sequence SNQMWQRPEPGDDEGVYRPLAYDGS. Position 228 (Gln-228) interacts with heme b.

In terms of assembly, homodimer. The cofactor is heme b.

Its subcellular location is the late endosome membrane. It is found in the lysosome membrane. The enzyme catalyses Fe(3+)(out) + L-ascorbate(in) = monodehydro-L-ascorbate radical(in) + Fe(2+)(out) + H(+). Functionally, transmembrane reductase that uses ascorbate as an electron donor in the cytoplasm and transfers electrons across membranes to reduce iron cations Fe(3+) into Fe(2+) in the lumen of the late endosome and lysosome. Reduced iron can then be extruded from the late endosome and lysosome to the cytoplasm by divalent metal-specific transporters. It is therefore most probably involved in endosomal and lysosomal cellular iron homeostasis. This Danio rerio (Zebrafish) protein is Lysosomal membrane ascorbate-dependent ferrireductase CYB561A3 (cyb561a3a).